A 336-amino-acid polypeptide reads, in one-letter code: Methionine synthase (336 aa).

Residues His-210, Cys-212, Glu-234, and Cys-294 each contribute to the Zn(2+) site.

Belongs to the archaeal MetE family. Requires Zn(2+) as cofactor.

It participates in amino-acid biosynthesis; L-methionine biosynthesis via de novo pathway. Functionally, catalyzes the transfer of a methyl group to L-homocysteine resulting in methionine formation. The physiological methyl donor is unknown. In Thermococcus kodakarensis (strain ATCC BAA-918 / JCM 12380 / KOD1) (Pyrococcus kodakaraensis (strain KOD1)), this protein is Methionine synthase.